The primary structure comprises 302 residues: Glycine--tRNA ligase alpha subunit (302 aa).

The protein belongs to the class-II aminoacyl-tRNA synthetase family. As to quaternary structure, tetramer of two alpha and two beta subunits.

It is found in the cytoplasm. The catalysed reaction is tRNA(Gly) + glycine + ATP = glycyl-tRNA(Gly) + AMP + diphosphate. In Xanthomonas euvesicatoria pv. vesicatoria (strain 85-10) (Xanthomonas campestris pv. vesicatoria), this protein is Glycine--tRNA ligase alpha subunit.